A 155-amino-acid chain; its full sequence is Ribonuclease H (155 aa).

The RNase H type-1 domain maps to 7 to 150; that stretch reads AQNAVDLYTD…ADKLACKGRD (144 aa). The Mg(2+) site is built by Asp16, Glu54, Asp77, and Asp142.

It belongs to the RNase H family. In terms of assembly, monomer. It depends on Mg(2+) as a cofactor.

The protein resides in the cytoplasm. It carries out the reaction Endonucleolytic cleavage to 5'-phosphomonoester.. Its function is as follows. Endonuclease that specifically degrades the RNA of RNA-DNA hybrids. This chain is Ribonuclease H, found in Saccharopolyspora erythraea (strain ATCC 11635 / DSM 40517 / JCM 4748 / NBRC 13426 / NCIMB 8594 / NRRL 2338).